The following is a 156-amino-acid chain: Transcription elongation factor GreA (156 aa).

A coiled-coil region spans residues 7-27 (MTQEGLDKLKLELENLKLVKR).

Belongs to the GreA/GreB family.

Functionally, necessary for efficient RNA polymerase transcription elongation past template-encoded arresting sites. The arresting sites in DNA have the property of trapping a certain fraction of elongating RNA polymerases that pass through, resulting in locked ternary complexes. Cleavage of the nascent transcript by cleavage factors such as GreA or GreB allows the resumption of elongation from the new 3'terminus. GreA releases sequences of 2 to 3 nucleotides. This Lactococcus lactis subsp. lactis (strain IL1403) (Streptococcus lactis) protein is Transcription elongation factor GreA.